A 164-amino-acid chain; its full sequence is Putative pre-16S rRNA nuclease (164 aa).

It belongs to the YqgF nuclease family.

Its subcellular location is the cytoplasm. Functionally, could be a nuclease involved in processing of the 5'-end of pre-16S rRNA. In Rhizobium johnstonii (strain DSM 114642 / LMG 32736 / 3841) (Rhizobium leguminosarum bv. viciae), this protein is Putative pre-16S rRNA nuclease.